A 418-amino-acid polypeptide reads, in one-letter code: Protein FAM53A (418 aa).

2 disordered regions span residues 198 to 236 (TSPV…FNPR) and 248 to 269 (ETGN…LSRR). The span at 205 to 229 (SSASSGFVDSSEGSTSSSTRWNSGG) shows a compositional bias: low complexity. Polar residues predominate over residues 248–265 (ETGNLLPSANSTPTSTPE). The Nuclear localization signal motif lies at 285–293 (KKSRLKRRR).

This sequence belongs to the FAM53 family.

The protein resides in the nucleus. In terms of biological role, may play an important role in neural development; the dorsomedial roof of the third ventricle. The protein is Protein FAM53A of Gallus gallus (Chicken).